The following is a 429-amino-acid chain: MTTVSYVTILLTVLVQVLTSDAKATNNKRELSSGLKERSLSDDAPQFWKGRFSRSEEDPQFWKGRFSDPQFWKGRFSDPQFWKGRFSDPQFWKGRFSDPQFWKGRFSDPQFWKGRFSDPQFWKGRFSDGTKRENDPQYWKGRFSRSFEDQPDSEAQFWKGRFARTSTGEKREPQYWKGRFSRDSVPGRYGRELQGRFGRELQGRFGREAQGRFGRELQGRFGREFQGRFGREDQGRFGREDQGRFGREDQGRFGREDQGRFGREDQGRFGREDQGRFGRELQGRFGREDQGRFGREDQGRFGREDQGRFGRELQGRFGREDQGRFGREDQGRFGREDLAKEDQGRFGREDLAKEDQGRFGREDIAKEDQGRFGRNAAAAAKKRTIDVIDIESDPKPQTRFRDGKDMQEKRKVEKKDKIEKSDDALAKIS.

Residues 1-22 (MTTVSYVTILLTVLVQVLTSDA) form the signal peptide. The propeptide occupies 23–233 (KATNNKRELS…EFQGRFGRED (211 aa)). Basic and acidic residues predominate over residues 230 to 371 (GREDQGRFGR…EDIAKEDQGR (142 aa)). Positions 230–429 (GREDQGRFGR…KSDDALAKIS (200 aa)) are disordered. Pyrrolidone carboxylic acid is present on glutamine 234. Residue phenylalanine 237 is modified to Phenylalanine amide. A propeptide spanning residues 239-241 (RED) is cleaved from the precursor. Glutamine 242 is modified (pyrrolidone carboxylic acid). Phenylalanine 245 carries the phenylalanine amide modification. A propeptide spanning residues 247–249 (RED) is cleaved from the precursor. Residue glutamine 250 is modified to Pyrrolidone carboxylic acid. A Phenylalanine amide modification is found at phenylalanine 253. Positions 255-257 (RED) are excised as a propeptide. Residue glutamine 258 is modified to Pyrrolidone carboxylic acid. Phenylalanine 261 bears the Phenylalanine amide mark. Residues 263–265 (RED) constitute a propeptide that is removed on maturation. At glutamine 266 the chain carries Pyrrolidone carboxylic acid. Phenylalanine amide is present on phenylalanine 269. Positions 271 to 273 (RED) are excised as a propeptide. Glutamine 274 is subject to Pyrrolidone carboxylic acid. Phenylalanine 277 carries the phenylalanine amide modification. The propeptide occupies 279 to 289 (RELQGRFGRED). Pyrrolidone carboxylic acid is present on glutamine 290. Residue phenylalanine 293 is modified to Phenylalanine amide. Residues 295-297 (RED) constitute a propeptide that is removed on maturation. The residue at position 298 (glutamine 298) is a Pyrrolidone carboxylic acid. At phenylalanine 301 the chain carries Phenylalanine amide. The propeptide occupies 303–305 (RED). Glutamine 306 is subject to Pyrrolidone carboxylic acid. The residue at position 309 (phenylalanine 309) is a Phenylalanine amide. Residues 311 to 321 (RELQGRFGRED) constitute a propeptide that is removed on maturation. Residue glutamine 322 is modified to Pyrrolidone carboxylic acid. The residue at position 325 (phenylalanine 325) is a Phenylalanine amide. A propeptide spanning residues 327–329 (RED) is cleaved from the precursor. Pyrrolidone carboxylic acid is present on glutamine 330. Position 333 is a phenylalanine amide (phenylalanine 333). Positions 335 to 342 (REDLAKED) are excised as a propeptide. A Pyrrolidone carboxylic acid modification is found at glutamine 343. A Phenylalanine amide modification is found at phenylalanine 346. Positions 348-355 (REDLAKED) are excised as a propeptide. Pyrrolidone carboxylic acid is present on glutamine 356. Phenylalanine 359 is modified (phenylalanine amide). Residues 361–368 (REDIAKED) constitute a propeptide that is removed on maturation. Residue glutamine 369 is modified to Pyrrolidone carboxylic acid. The residue at position 372 (phenylalanine 372) is a Phenylalanine amide. The propeptide occupies 374–429 (RNAAAAAKKRTIDVIDIESDPKPQTRFRDGKDMQEKRKVEKKDKIEKSDDALAKIS). The segment covering 392–429 (SDPKPQTRFRDGKDMQEKRKVEKKDKIEKSDDALAKIS) has biased composition (basic and acidic residues).

Belongs to the FARP (FMRFamide related peptide) family.

Its subcellular location is the secreted. Not known but it could act as a transmitter at neuromuscular synapses. This chain is Antho-RFamide neuropeptides type 2, found in Anthopleura elegantissima (Green aggregating anemone).